Reading from the N-terminus, the 323-residue chain is Methionine adenosyltransferase 2 subunit beta (323 aa).

NADP(+) is bound by residues 26 to 29 (TGLL), 49 to 51 (YNR), 60 to 61 (NL), C82, R86, Y146, and L172. The segment at 308–323 (LWPFQHDKRWRQTVFH) is required for interaction with MAT2A.

Belongs to the dTDP-4-dehydrorhamnose reductase family. MAT2B subfamily. As to quaternary structure, heterotrimer; composed of a catalytic mat2a homodimer that binds one regulatory mat2b chain. Heterohexamer; composed of a central, catalytic mat2a homotetramer flanked on either side by a regulatory mat2b chain. NADP binding increases the affinity for mat2a.

It participates in amino-acid biosynthesis; S-adenosyl-L-methionine biosynthesis; S-adenosyl-L-methionine from L-methionine: step 1/1. Regulatory subunit of S-adenosylmethionine synthetase 2, an enzyme that catalyzes the formation of S-adenosylmethionine from methionine and ATP. Regulates MAT2A catalytic activity by changing its kinetic properties, increasing its affinity for L-methionine. Can bind NADP (in vitro). This Danio rerio (Zebrafish) protein is Methionine adenosyltransferase 2 subunit beta (mat2b).